The primary structure comprises 320 residues: Cytochrome f (320 aa).

A signal peptide spans 1–35; the sequence is MQTRNTFSWIREEITRSISVSLMIYIITWASISSA. Residues tyrosine 36, cysteine 56, cysteine 59, and histidine 60 each coordinate heme. The helical transmembrane segment at 286-306 threads the bilayer; that stretch reads VQGLLFFLGSVVLAQIFLVLK.

Belongs to the cytochrome f family. In terms of assembly, the 4 large subunits of the cytochrome b6-f complex are cytochrome b6, subunit IV (17 kDa polypeptide, petD), cytochrome f and the Rieske protein, while the 4 small subunits are PetG, PetL, PetM and PetN. The complex functions as a dimer. Heme serves as cofactor.

Its subcellular location is the plastid. The protein localises to the chloroplast thylakoid membrane. Its function is as follows. Component of the cytochrome b6-f complex, which mediates electron transfer between photosystem II (PSII) and photosystem I (PSI), cyclic electron flow around PSI, and state transitions. The polypeptide is Cytochrome f (Crucihimalaya wallichii (Rock-cress)).